Here is an 89-residue protein sequence, read N- to C-terminus: Small ribosomal subunit protein uS15 (89 aa).

The protein belongs to the universal ribosomal protein uS15 family. As to quaternary structure, part of the 30S ribosomal subunit. Forms a bridge to the 50S subunit in the 70S ribosome, contacting the 23S rRNA.

Its function is as follows. One of the primary rRNA binding proteins, it binds directly to 16S rRNA where it helps nucleate assembly of the platform of the 30S subunit by binding and bridging several RNA helices of the 16S rRNA. In terms of biological role, forms an intersubunit bridge (bridge B4) with the 23S rRNA of the 50S subunit in the ribosome. The chain is Small ribosomal subunit protein uS15 from Bacillus licheniformis (strain ATCC 14580 / DSM 13 / JCM 2505 / CCUG 7422 / NBRC 12200 / NCIMB 9375 / NCTC 10341 / NRRL NRS-1264 / Gibson 46).